A 434-amino-acid polypeptide reads, in one-letter code: MTHLLTIHTQVEGEITALAFGGAGILRYHGFVIFVPFTAPGDQIICRIIEIKKSFAVAELVKLKQPSSLRVQPPCPYFGKCGGCQLQHLNEQTQLNYKLTAITDTLKRIGHLKVPSVEMNTAQLNWAYRRHITLHLKSFNQSFQAGYIATDHFSLISIDTCPIFNNLHDPIISILQKFISTLPNPNQQDGRLTLLKNQNSQYILSFQFCSLNELNRILFQEALEKYPIFSGILVTSPKKQWIIGNPYSEQKIENLIFRFTPQAFIQNHPEQSLYIYKKICSLTIQLKSKKILDLYCGFGITSLLLASQGHFVTGIEYNSDAIRFAKENSKLNHLPHVEFLEGDVEKILPICLKSQKCVDLVIVNPPRIGLSKSVIKILMSALPEDMIYISCMPSTLARDLSILCEDLYEIHECTAYDMFPQTSHVETLVHLKKV.

In terms of domain architecture, TRAM spans 4 to 62 (LLTIHTQVEGEITALAFGGAGILRYHGFVIFVPFTAPGDQIICRIIEIKKSFAVAELVK). 4 residues coordinate [4Fe-4S] cluster: Cys75, Cys81, Cys84, and Cys161. S-adenosyl-L-methionine-binding residues include Gln266, Tyr295, Glu316, and Asn364. Cys391 serves as the catalytic Nucleophile.

This sequence belongs to the class I-like SAM-binding methyltransferase superfamily. RNA M5U methyltransferase family.

This is an uncharacterized protein from Protochlamydia amoebophila (strain UWE25).